Consider the following 287-residue polypeptide: Shikimate dehydrogenase (NADP(+)) (287 aa).

Residues 20–22 (SRS) and threonine 67 contribute to the shikimate site. The active-site Proton acceptor is lysine 71. Position 84 (glutamate 84) interacts with NADP(+). Residues asparagine 93 and aspartate 108 each coordinate shikimate. NADP(+) is bound by residues 132 to 136 (GAGGA), 156 to 161 (NRTAAR), and methionine 226. Tyrosine 228 provides a ligand contact to shikimate. Glycine 250 lines the NADP(+) pocket.

This sequence belongs to the shikimate dehydrogenase family. In terms of assembly, homodimer.

It carries out the reaction shikimate + NADP(+) = 3-dehydroshikimate + NADPH + H(+). Its pathway is metabolic intermediate biosynthesis; chorismate biosynthesis; chorismate from D-erythrose 4-phosphate and phosphoenolpyruvate: step 4/7. Involved in the biosynthesis of the chorismate, which leads to the biosynthesis of aromatic amino acids. Catalyzes the reversible NADPH linked reduction of 3-dehydroshikimate (DHSA) to yield shikimate (SA). In Bordetella parapertussis (strain 12822 / ATCC BAA-587 / NCTC 13253), this protein is Shikimate dehydrogenase (NADP(+)).